A 445-amino-acid chain; its full sequence is MATRANVPEQVRGAPLVDGLKIQNKNGAVKSRRALGDIGNLVSVPGVQGGKAQPPINRPITRSFRAQLLANAQLERKPINGDNKVPALGPKRQPLAARNPEAQRAVQKKNLVVKQQTKPVEVIETKKEVTKKEVAMSPKNKKVTYSSVLSARSKAACGIVNKPKIIDIDESDKDNHLAAVEYVDDMYSFYKEVEKESQPKMYMHIQTEMNEKMRAILIDWLLEVHIKFELNLETLYLTVNIIDRFLSVKAVPKRELQLVGISALLIASKYEEIWPPQVNDLVYVTDNAYSSRQILVMEKAILGNLEWYLTVPTQYVFLVRFIKASMSDPEMENMVHFLAELGMMHYDTLTFCPSMLAASAVYTARCSLNKSPAWTDTLQFHTGYTESEIMDCSKLLAFLHSRCGESRLRAVYKKYSKAENGGVAMVSPAKSLLSAAADWKKPVSS.

This sequence belongs to the cyclin family. Cyclin AB subfamily. In terms of assembly, interacts with FZR2/CCS52A1, FZR1/CCS52A2 and FZR3/CCS52B. In terms of tissue distribution, expressed in roots, stems and flowers.

Functionally, may induce mitotic cell division. The polypeptide is Cyclin-B1-2 (CYCB1-2) (Arabidopsis thaliana (Mouse-ear cress)).